A 254-amino-acid polypeptide reads, in one-letter code: MLTITKRLVTTDVRSRILLSSLNGKMSDALALLRQQQQTSVDVELLHTMLARAAALAHADTIAYMWYQHVMPRRLPVEGRLLCEMAGVALYQDRLFLPAQFLQHYQAMNRDRRTSPEDELIEYELRRIKVEAFARGTMHSTALREKWKVFLQEMDTLPGQPPLRLRDFPQMTKAMGIALMQQDEQAAALALFGRQPLVIKNEWSLPLLLAGVLWHVPGPAQARRVLAEFRQSYRGLPLLDAELVIKRRGFEINT.

The N-terminal 8 residues, 1-8 (MLTITKRL), are a transit peptide targeting the mitochondrion. An essential for PET122 function region spans residues 185-254 (QAAALALFGR…IKRRGFEINT (70 aa)).

It localises to the mitochondrion inner membrane. In terms of biological role, required for expression of the mitochondrial gene for cytochrome c oxidase subunit 3 (COX3). PET122 seems to work by directly interacting with the small ribosomal subunit to promote translation initiation on the COX3 mRNA. The polypeptide is Protein PET122, mitochondrial (PET122) (Saccharomyces cerevisiae (strain ATCC 204508 / S288c) (Baker's yeast)).